A 271-amino-acid polypeptide reads, in one-letter code: Putative phosphoenolpyruvate synthase regulatory protein (271 aa).

152–159 (GVSRSGKT) contributes to the ADP binding site.

The protein belongs to the pyruvate, phosphate/water dikinase regulatory protein family. PSRP subfamily.

The enzyme catalyses [pyruvate, water dikinase] + ADP = [pyruvate, water dikinase]-phosphate + AMP + H(+). It carries out the reaction [pyruvate, water dikinase]-phosphate + phosphate + H(+) = [pyruvate, water dikinase] + diphosphate. In terms of biological role, bifunctional serine/threonine kinase and phosphorylase involved in the regulation of the phosphoenolpyruvate synthase (PEPS) by catalyzing its phosphorylation/dephosphorylation. The sequence is that of Putative phosphoenolpyruvate synthase regulatory protein from Dichelobacter nodosus (strain VCS1703A).